Consider the following 476-residue polypeptide: Glycogen synthase (476 aa).

ADP-alpha-D-glucose is bound at residue Lys-15.

Belongs to the glycosyltransferase 1 family. Bacterial/plant glycogen synthase subfamily.

It carries out the reaction [(1-&gt;4)-alpha-D-glucosyl](n) + ADP-alpha-D-glucose = [(1-&gt;4)-alpha-D-glucosyl](n+1) + ADP + H(+). It participates in glycan biosynthesis; glycogen biosynthesis. Synthesizes alpha-1,4-glucan chains using ADP-glucose. The protein is Glycogen synthase of Bacillus anthracis.